The sequence spans 305 residues: Homoserine O-acetyltransferase (305 aa).

The Acyl-thioester intermediate role is filled by Cys142. The substrate site is built by Lys163 and Ser192. The Proton acceptor role is filled by His235. Glu237 is an active-site residue. Position 249 (Arg249) interacts with substrate.

Belongs to the MetA family.

It is found in the cytoplasm. It catalyses the reaction L-homoserine + acetyl-CoA = O-acetyl-L-homoserine + CoA. The protein operates within amino-acid biosynthesis; L-methionine biosynthesis via de novo pathway; O-acetyl-L-homoserine from L-homoserine: step 1/1. Functionally, transfers an acetyl group from acetyl-CoA to L-homoserine, forming acetyl-L-homoserine. In Cereibacter sphaeroides (strain ATCC 17025 / ATH 2.4.3) (Rhodobacter sphaeroides), this protein is Homoserine O-acetyltransferase.